Consider the following 428-residue polypeptide: Tyrosine--tRNA ligase (428 aa).

Residue Y34 coordinates L-tyrosine. A 'HIGH' region motif is present at residues 39–48; the sequence is PTADSLHIGH. L-tyrosine-binding residues include Y171 and Q175. The short motif at 236–240 is the 'KMSKS' region element; that stretch reads KFGKT. Residue K239 coordinates ATP. Residues 358 to 424 enclose the S4 RNA-binding domain; that stretch reads VGLIDLLVDA…GKKKYFLIQV (67 aa).

It belongs to the class-I aminoacyl-tRNA synthetase family. TyrS type 1 subfamily. Homodimer.

It localises to the cytoplasm. It catalyses the reaction tRNA(Tyr) + L-tyrosine + ATP = L-tyrosyl-tRNA(Tyr) + AMP + diphosphate + H(+). Catalyzes the attachment of tyrosine to tRNA(Tyr) in a two-step reaction: tyrosine is first activated by ATP to form Tyr-AMP and then transferred to the acceptor end of tRNA(Tyr). This Oceanobacillus iheyensis (strain DSM 14371 / CIP 107618 / JCM 11309 / KCTC 3954 / HTE831) protein is Tyrosine--tRNA ligase.